The chain runs to 238 residues: Flagellar L-ring protein (238 aa).

A signal peptide spans 1-16 (MNKAILAVAMVLLLAG). The N-palmitoyl cysteine moiety is linked to residue cysteine 17. Cysteine 17 is lipidated: S-diacylglycerol cysteine.

Belongs to the FlgH family. In terms of assembly, the basal body constitutes a major portion of the flagellar organelle and consists of four rings (L,P,S, and M) mounted on a central rod.

It is found in the cell outer membrane. The protein resides in the bacterial flagellum basal body. Its function is as follows. Assembles around the rod to form the L-ring and probably protects the motor/basal body from shearing forces during rotation. The sequence is that of Flagellar L-ring protein from Brucella melitensis biotype 2 (strain ATCC 23457).